A 154-amino-acid chain; its full sequence is Interleukin-2 (154 aa).

Positions 1 to 20 are cleaved as a signal peptide; it reads MYRMQLLSCIALSLALVTNS. The O-linked (GalNAc...) threonine glycan is linked to Thr-23. A disulfide bridge links Cys-78 with Cys-126.

It belongs to the IL-2 family.

The protein localises to the secreted. Its function is as follows. Cytokine produced by activated CD4-positive helper T-cells and to a lesser extend activated CD8-positive T-cells and natural killer (NK) cells that plays pivotal roles in the immune response and tolerance. Binds to a receptor complex composed of either the high-affinity trimeric IL-2R (IL2RA/CD25, IL2RB/CD122 and IL2RG/CD132) or the low-affinity dimeric IL-2R (IL2RB and IL2RG). Interaction with the receptor leads to oligomerization and conformation changes in the IL-2R subunits resulting in downstream signaling starting with phosphorylation of JAK1 and JAK3. In turn, JAK1 and JAK3 phosphorylate the receptor to form a docking site leading to the phosphorylation of several substrates including STAT5. This process leads to activation of several pathways including STAT, phosphoinositide-3-kinase/PI3K and mitogen-activated protein kinase/MAPK pathways. Functions as a T-cell growth factor and can increase NK-cell cytolytic activity as well. Promotes strong proliferation of activated B-cells and subsequently immunoglobulin production. Plays a pivotal role in regulating the adaptive immune system by controlling the survival and proliferation of regulatory T-cells, which are required for the maintenance of immune tolerance. Moreover, participates in the differentiation and homeostasis of effector T-cell subsets, including Th1, Th2, Th17 as well as memory CD8-positive T-cells. The polypeptide is Interleukin-2 (IL2) (Cercocebus atys (Sooty mangabey)).